We begin with the raw amino-acid sequence, 185 residues long: Peptidyl-tRNA hydrolase (185 aa).

TRNA is bound at residue Tyr-14. Residue His-19 is the Proton acceptor of the active site. Residues Tyr-65, Asn-67, and Asn-113 each contribute to the tRNA site.

Belongs to the PTH family. As to quaternary structure, monomer.

It is found in the cytoplasm. The enzyme catalyses an N-acyl-L-alpha-aminoacyl-tRNA + H2O = an N-acyl-L-amino acid + a tRNA + H(+). Its function is as follows. Hydrolyzes ribosome-free peptidyl-tRNAs (with 1 or more amino acids incorporated), which drop off the ribosome during protein synthesis, or as a result of ribosome stalling. In terms of biological role, catalyzes the release of premature peptidyl moieties from peptidyl-tRNA molecules trapped in stalled 50S ribosomal subunits, and thus maintains levels of free tRNAs and 50S ribosomes. The chain is Peptidyl-tRNA hydrolase from Rickettsia felis (strain ATCC VR-1525 / URRWXCal2) (Rickettsia azadi).